Consider the following 402-residue polypeptide: Triose phosphate/phosphate translocator, chloroplastic (402 aa).

A chloroplast-targeting transit peptide spans 1–72 (MESRVLSRAT…KGASLLRPCP (72 aa)). Over 73 to 96 (ATAGGNDSAGEEKVAPVGFFSRYP) the chain is Chloroplast intermembrane. Residues 97–117 (ALTTGFFFFTWYFLNVIFNIL) form a helical membrane-spanning segment. The Lumenal portion of the chain corresponds to 118-129 (NKKIYNYFPYPY). A helical membrane pass occupies residues 130-150 (FVSVIHLAVGVVYCLVSWTVG). Residues 151 to 207 (LPKRAPIDGNLLKLLIPVAVCHALGHVTSNVSFAAVAVSFTHTVKALEPFFNAAASQ) lie on the Chloroplast intermembrane side of the membrane. The chain crosses the membrane as a helical span at residues 208–228 (FILGQSIPITLWLSLAPVVIG). Residues 229–272 (VSMASLTELSFNWLGFISAMISNISFTYRSIYSKKAMTDMDSTN) lie on the Lumenal side of the membrane. The helical transmembrane segment at 273–292 (IYAYISIIALIVCIPPALII) threads the bilayer. At 293-370 (EGPTLLKTGF…IIFGNKISTQ (78 aa)) the chain is on the chloroplast intermembrane side. A helical transmembrane segment spans residues 371-391 (TGIGTGIAIAGVALYSFIKAQ). Residues 392–402 (IEEEKRQAKAA) are Lumenal-facing.

The protein belongs to the TPT transporter family. TPT (TC 2.A.7.9) subfamily. In terms of assembly, homodimer.

It is found in the plastid. The protein resides in the chloroplast membrane. Its function is as follows. Mediates the export of fixed carbons from the chloroplasts into the cytosol in the form of triose phosphates. This chain is Triose phosphate/phosphate translocator, chloroplastic, found in Pisum sativum (Garden pea).